A 304-amino-acid polypeptide reads, in one-letter code: Acetyl-coenzyme A carboxylase carboxyl transferase subunit beta (304 aa).

Positions 25 to 294 (VWTKCDSCGQ…PSVVESKADT (270 aa)) constitute a CoA carboxyltransferase N-terminal domain. Residues cysteine 29, cysteine 32, cysteine 48, and cysteine 51 each contribute to the Zn(2+) site. The C4-type zinc finger occupies 29 to 51 (CDSCGQVLYRAELERNLEVCPKC).

This sequence belongs to the AccD/PCCB family. As to quaternary structure, acetyl-CoA carboxylase is a heterohexamer composed of biotin carboxyl carrier protein (AccB), biotin carboxylase (AccC) and two subunits each of ACCase subunit alpha (AccA) and ACCase subunit beta (AccD). Zn(2+) serves as cofactor.

It localises to the cytoplasm. The catalysed reaction is N(6)-carboxybiotinyl-L-lysyl-[protein] + acetyl-CoA = N(6)-biotinyl-L-lysyl-[protein] + malonyl-CoA. Its pathway is lipid metabolism; malonyl-CoA biosynthesis; malonyl-CoA from acetyl-CoA: step 1/1. Functionally, component of the acetyl coenzyme A carboxylase (ACC) complex. Biotin carboxylase (BC) catalyzes the carboxylation of biotin on its carrier protein (BCCP) and then the CO(2) group is transferred by the transcarboxylase to acetyl-CoA to form malonyl-CoA. The polypeptide is Acetyl-coenzyme A carboxylase carboxyl transferase subunit beta (Yersinia pestis (strain Pestoides F)).